Reading from the N-terminus, the 165-residue chain is Protein phosphatase 1 regulatory subunit 14C (165 aa).

Over residues 1 to 12 the composition is skewed to low complexity; the sequence is MSVATGSSETAG. The tract at residues 1 to 73 is disordered; that stretch reads MSVATGSSET…QRRHQQGKVT (73 aa). N-acetylserine is present on Ser2. Ser25 carries the post-translational modification Phosphoserine. An Omega-N-methylarginine modification is found at Arg27. Ser33 bears the Phosphoserine mark. Residues 35–63 show a composition bias toward low complexity; sequence GSSSGSGSSREDSAPVATAAAAGQVQQQQ. Phosphothreonine; by ILK1 is present on Thr73.

It belongs to the PP1 inhibitor family. Has over 600-fold higher inhibitory activity when phosphorylated, creating a molecular switch for regulating the phosphorylation status of PPP1CA substrates and smooth muscle contraction. The main inhibitory site appears to be Thr-73. Detected in breast cancer.

Its subcellular location is the cytoplasm. The protein localises to the membrane. In terms of biological role, inhibitor of the PP1 regulatory subunit PPP1CA. In Homo sapiens (Human), this protein is Protein phosphatase 1 regulatory subunit 14C (PPP1R14C).